Consider the following 235-residue polypeptide: Large ribosomal subunit protein bL25 (235 aa).

2 disordered regions span residues 1–21 and 210–235; these read MADNIINAQRREEKGKGPARR and APAAGAAPAAGGEAAKKAPEAKGAKK. Over residues 210 to 222 the composition is skewed to low complexity; it reads APAAGAAPAAGGE. Residues 223 to 235 show a composition bias toward basic and acidic residues; sequence AAKKAPEAKGAKK.

The protein belongs to the bacterial ribosomal protein bL25 family. CTC subfamily. Part of the 50S ribosomal subunit; part of the 5S rRNA/L5/L18/L25 subcomplex. Contacts the 5S rRNA. Binds to the 5S rRNA independently of L5 and L18.

Its function is as follows. This is one of the proteins that binds to the 5S RNA in the ribosome where it forms part of the central protuberance. The sequence is that of Large ribosomal subunit protein bL25 from Anaeromyxobacter sp. (strain Fw109-5).